Here is a 252-residue protein sequence, read N- to C-terminus: 3-dehydroquinate dehydratase (252 aa).

Residues serine 21, 46-48 (EWR), and arginine 82 contribute to the 3-dehydroquinate site. The active-site Proton donor/acceptor is the histidine 143. Lysine 170 functions as the Schiff-base intermediate with substrate in the catalytic mechanism. The 3-dehydroquinate site is built by arginine 213, serine 232, and glutamine 236.

It belongs to the type-I 3-dehydroquinase family. Homodimer.

The enzyme catalyses 3-dehydroquinate = 3-dehydroshikimate + H2O. The protein operates within metabolic intermediate biosynthesis; chorismate biosynthesis; chorismate from D-erythrose 4-phosphate and phosphoenolpyruvate: step 3/7. Its function is as follows. Involved in the third step of the chorismate pathway, which leads to the biosynthesis of aromatic amino acids. Catalyzes the cis-dehydration of 3-dehydroquinate (DHQ) and introduces the first double bond of the aromatic ring to yield 3-dehydroshikimate. The chain is 3-dehydroquinate dehydratase from Shigella boydii serotype 4 (strain Sb227).